The following is a 366-amino-acid chain: Carbamoyl phosphate synthase small chain (366 aa).

Positions 1 to 171 (MLERRYLVLE…KTPYVSTGSD (171 aa)) are CPSase. L-glutamine is bound by residues Ser-47, Gly-221, and Gly-223. One can recognise a Glutamine amidotransferase type-1 domain in the interval 173–360 (SVVLLDFGKK…MTMMKEFKEK (188 aa)). The active-site Nucleophile is Cys-248. Leu-249, Gln-252, Asn-290, Gly-292, and Tyr-293 together coordinate L-glutamine. Catalysis depends on residues His-333 and Glu-335.

This sequence belongs to the CarA family. In terms of assembly, composed of two chains; the small (or glutamine) chain promotes the hydrolysis of glutamine to ammonia, which is used by the large (or ammonia) chain to synthesize carbamoyl phosphate. Tetramer of heterodimers (alpha,beta)4.

The catalysed reaction is hydrogencarbonate + L-glutamine + 2 ATP + H2O = carbamoyl phosphate + L-glutamate + 2 ADP + phosphate + 2 H(+). It catalyses the reaction L-glutamine + H2O = L-glutamate + NH4(+). It participates in amino-acid biosynthesis; L-arginine biosynthesis; carbamoyl phosphate from bicarbonate: step 1/1. It functions in the pathway pyrimidine metabolism; UMP biosynthesis via de novo pathway; (S)-dihydroorotate from bicarbonate: step 1/3. In terms of biological role, small subunit of the glutamine-dependent carbamoyl phosphate synthetase (CPSase). CPSase catalyzes the formation of carbamoyl phosphate from the ammonia moiety of glutamine, carbonate, and phosphate donated by ATP, constituting the first step of 2 biosynthetic pathways, one leading to arginine and/or urea and the other to pyrimidine nucleotides. The small subunit (glutamine amidotransferase) binds and cleaves glutamine to supply the large subunit with the substrate ammonia. This Staphylococcus haemolyticus (strain JCSC1435) protein is Carbamoyl phosphate synthase small chain.